The sequence spans 107 residues: Protein RnfH (107 aa).

The disordered stretch occupies residues 82–107 (ARRKRAEKAKEEGRANKVTGGRPIER).

Belongs to the UPF0125 (RnfH) family.

This chain is Protein RnfH, found in Pseudoalteromonas translucida (strain TAC 125).